A 106-amino-acid chain; its full sequence is MADLISYDDAIDAAYDIFLEMAPDNLEPVDVILFTAQFDDRGAAELVDISDDWAGHVGFDVDKESYAEVRIGLVNEENDVLDDVFARMLISRDPDQKFCHILWKRD.

This sequence belongs to the putative dsDNA mimic protein family.

May act as a double-stranded DNA (dsDNA) mimic. Probably regulates the activity of a dsDNA-binding protein. The protein is Putative double-stranded DNA mimic protein VV1228 of Vibrio vulnificus (strain YJ016).